The following is a 151-amino-acid chain: FIS1-related protein fis-2 (151 aa).

A helical transmembrane segment spans residues 126 to 146 (LIGAAIVGGGALALAGLVAIF).

This sequence belongs to the FIS1 family.

Its subcellular location is the mitochondrion outer membrane. It localises to the peroxisome membrane. The protein resides in the mitochondrion. Involved in the fragmentation of the mitochondrial network. Involved in perinuclear clustering of the mitochondrial network. May act, redundantly with fis-1, downstream of mitochondrial fission, before the fission products participate in mitochondrial homeostasis, mitophagy, or apoptosis. Plays a role in apoptosis by promoting mitochondrial elimination and cell-death execution, acting downstream of caspase ced-3, and perhaps independently of dynamin GTPase drp-1, caspase ced-9 and apoptosis-inducing factor AIFM/wah-1. The chain is FIS1-related protein fis-2 from Caenorhabditis elegans.